Consider the following 443-residue polypeptide: Amino-acid acetyltransferase (443 aa).

One can recognise an N-acetyltransferase domain in the interval 296 to 435 (EQIRRATIND…KEMYNYQRRS (140 aa)).

It belongs to the acetyltransferase family. ArgA subfamily. As to quaternary structure, homohexamer.

Its subcellular location is the cytoplasm. The enzyme catalyses L-glutamate + acetyl-CoA = N-acetyl-L-glutamate + CoA + H(+). Its pathway is amino-acid biosynthesis; L-arginine biosynthesis; N(2)-acetyl-L-ornithine from L-glutamate: step 1/4. The polypeptide is Amino-acid acetyltransferase (Enterobacter sp. (strain 638)).